Reading from the N-terminus, the 406-residue chain is Endoplasmic reticulum resident protein 44 (406 aa).

The N-terminal stretch at 1–29 is a signal peptide; it reads MIPGIFLSLPDLRCSLLLLVTWVFTPVTA. The region spanning 30–138 is the Thioredoxin domain; the sequence is EIISLDTENI…VKALADYIRQ (109 aa). 2 disulfides stabilise this stretch: cysteine 189–cysteine 241 and cysteine 301–cysteine 318. Positions 236–285 are interaction with ITPR1; it reads WIQDKCVPLVREITFENGEELTEEGLPFLILFHMKEDTESLEIFQNEVAR. The tract at residues 360-387 is disordered; it reads FHHGPDPTDTAPGEEVQDVASSPPESSF. Over residues 378-387 the composition is skewed to polar residues; the sequence is VASSPPESSF. Residues 403-406 carry the Prevents secretion from ER motif; the sequence is RDEL.

In terms of assembly, forms mixed disulfides with both ERO1A and ERO1B and cargo folding intermediates; the interactions with ERO1A and ERO1B result in their retention in the endoplasmic reticulum. Directly interacts with ITPR1 in a pH-, redox state- and calcium-dependent manner, but not with ITPR2 or ITPR3. The strength of this interaction inversely correlates with calcium concentration.

Its subcellular location is the endoplasmic reticulum lumen. Functionally, mediates thiol-dependent retention in the early secretory pathway, forming mixed disulfides with substrate proteins through its conserved CRFS motif. Inhibits the calcium channel activity of ITPR1. May have a role in the control of oxidative protein folding in the endoplasmic reticulum. Required to retain ERO1A and ERO1B in the endoplasmic reticulum. This is Endoplasmic reticulum resident protein 44 (ERP44) from Bos taurus (Bovine).